Consider the following 299-residue polypeptide: Non-structural protein V (299 aa).

Positions 41-99 are disordered; that stretch reads DNPGQERATCREEKAGSSGLSKPCLSAIGSTEGGAPRIRGQGPGESDDDAETLGIPPRN. The segment at 110-120 is interaction with host STAT1; sequence YYVYDHSGEAV. Residues 134–145 are compositionally biased toward low complexity; the sequence is GLDGDSTLSGGD. The tract at residues 134 to 162 is disordered; it reads GLDGDSTLSGGDNESENSDVDIGEPDTEG. Acidic residues predominate over residues 146-160; that stretch reads NESENSDVDIGEPDT. 8 residues coordinate Zn(2+): histidine 232, cysteine 251, cysteine 255, cysteine 267, cysteine 269, cysteine 272, cysteine 276, and cysteine 279.

This sequence belongs to the paramyxoviruses V protein family. Interacts with host IFIH1/MDA5 and DHX58/LGP2; these interactions are involved in the inhibition of the host type I interferon signaling pathway. Interacts with host TYK2; this interaction inhibits the type I interferon signaling pathway without affecting the type II pathway. Interacts with host IRF7; this interaction inhibits IRF7 translocation to the nucleus. Interacts with host CHUK. Interacts with host RELA/p65; this interaction inhibits the nuclear translocation of NF-KappaB. Interacts (via N-terminus) with host STAT1 and JAK1; these interactions inhibit STAT1 phosphorylation by Jak1 and thereby the type I interferon signaling pathway. Interacts (via C-terminus) with host STAT2; this interaction is involved in the inhibition of the host type I interferon signaling pathway. Forms a complex with host PPP1CA and PPP1CC; this interaction prevents dephosphorylation of host IFIH1/MDA5 and leads to the inhibition of the host type I interferon signaling pathway. Interacts with host IRF9; this interaction prevents the binding of IRF9 to STAT2 and thereby the type I interferon signaling pathway.

The protein localises to the host cytoplasm. In terms of biological role, plays an essential role in the inhibition of host immune response. Prevents the establishment of cellular antiviral state by blocking interferon-alpha/beta (IFN-alpha/beta) production and signaling pathway. Interacts with host IFIH1/MDA5 and DHX58/LGP2 to inhibit the transduction pathway involved in the activation of IFN-beta promoter, thus protecting the virus against cell antiviral state. Blocks the type I interferon signaling pathway by interacting with host TYK2 and thereby inhibiting downstream STAT1 and STAT2 phosphorylation. Moderately affects the type II interferon signaling. The chain is Non-structural protein V (P/V) from Measles virus (strain Edmonston-Schwarz vaccine) (MeV).